The following is a 330-amino-acid chain: Beta-ketoacyl-[acyl-carrier-protein] synthase III (330 aa).

Active-site residues include C114 and H257. The tract at residues 258–262 (QANLR) is ACP-binding. Residue N287 is part of the active site.

It belongs to the thiolase-like superfamily. FabH family. As to quaternary structure, homodimer.

The protein localises to the cytoplasm. The enzyme catalyses malonyl-[ACP] + acetyl-CoA + H(+) = 3-oxobutanoyl-[ACP] + CO2 + CoA. Its pathway is lipid metabolism; fatty acid biosynthesis. Its function is as follows. Catalyzes the condensation reaction of fatty acid synthesis by the addition to an acyl acceptor of two carbons from malonyl-ACP. Catalyzes the first condensation reaction which initiates fatty acid synthesis and may therefore play a role in governing the total rate of fatty acid production. Possesses both acetoacetyl-ACP synthase and acetyl transacylase activities. Its substrate specificity determines the biosynthesis of branched-chain and/or straight-chain of fatty acids. The chain is Beta-ketoacyl-[acyl-carrier-protein] synthase III from Oleidesulfovibrio alaskensis (strain ATCC BAA-1058 / DSM 17464 / G20) (Desulfovibrio alaskensis).